The sequence spans 384 residues: Isoafricanol synthase (384 aa).

Mg(2+) is bound by residues aspartate 95, asparagine 245, serine 249, and glutamate 253.

The protein belongs to the terpene synthase family. Mg(2+) serves as cofactor.

It carries out the reaction (2E,6E)-farnesyl diphosphate + H2O = (+)-isoafricanol + diphosphate. Its function is as follows. Catalyzes the cyclization of farnesyl diphosphate (FPP) to isoafricanol. In Streptomyces violaceusniger (strain Tu 4113), this protein is Isoafricanol synthase.